The chain runs to 353 residues: Virulence plasmid protein pGP2-D (353 aa).

The chain is Virulence plasmid protein pGP2-D from Chlamydia muridarum (strain MoPn / Nigg).